The sequence spans 357 residues: Arginine kinase (357 aa).

Ala-2 carries the post-translational modification N-acetylalanine. The 83-residue stretch at 9–91 (KLEEGFKKLE…FDPIIEDYHK (83 aa)) folds into the Phosphagen kinase N-terminal domain. 64-68 (GVGVY) provides a ligand contact to L-arginine. Residues 119 to 356 (FVISTRVRCG…LELIKIEKEM (238 aa)) form the Phosphagen kinase C-terminal domain. ATP is bound by residues 122–126 (STRVR) and His-185. Glu-225 provides a ligand contact to L-arginine. Arg-229 serves as a coordination point for ATP. Cys-271 contributes to the L-arginine binding site. ATP is bound by residues 280–284 (RASVH) and 309–314 (RGTRGE). Glu-314 contacts L-arginine.

This sequence belongs to the ATP:guanido phosphotransferase family.

The enzyme catalyses L-arginine + ATP = N(omega)-phospho-L-arginine + ADP + H(+). This Carcinus maenas (Common shore crab) protein is Arginine kinase.